The following is a 443-amino-acid chain: ATP-dependent protease ATPase subunit HslU (443 aa).

ATP-binding positions include I18, 60-65 (GVGKTE), D256, E321, and R393.

The protein belongs to the ClpX chaperone family. HslU subfamily. As to quaternary structure, a double ring-shaped homohexamer of HslV is capped on each side by a ring-shaped HslU homohexamer. The assembly of the HslU/HslV complex is dependent on binding of ATP.

It localises to the cytoplasm. Functionally, ATPase subunit of a proteasome-like degradation complex; this subunit has chaperone activity. The binding of ATP and its subsequent hydrolysis by HslU are essential for unfolding of protein substrates subsequently hydrolyzed by HslV. HslU recognizes the N-terminal part of its protein substrates and unfolds these before they are guided to HslV for hydrolysis. This chain is ATP-dependent protease ATPase subunit HslU, found in Yersinia pestis bv. Antiqua (strain Antiqua).